We begin with the raw amino-acid sequence, 698 residues long: Probable xyloglucan glycosyltransferase 2 (698 aa).

2 consecutive transmembrane segments (helical) span residues 124–144 (GFLA…WNGW) and 190–210 (ILLF…CFWI). Asp-272 is an active-site residue. Residues Asp-331 and Asp-333 each contribute to the substrate site. Asp-425 is a catalytic residue. The next 4 membrane-spanning stretches (helical) occupy residues 503–523 (LILP…TMFV), 528–548 (LPVW…ILPS), 653–668 (LALS…RSLL), and 673–693 (IHFY…LDLI).

This sequence belongs to the glycosyltransferase 2 family. Plant cellulose synthase-like C subfamily.

Its subcellular location is the golgi apparatus membrane. Functionally, probable beta-1,4-glucan synthase rather involved in the synthesis of the xyloglucan backbone than cellulose. Seems to work simultaneously with xyloglucan 6-xylosyltransferase. Xyloglucan is a noncellulosic polysaccharides of plant cell wall and consists of a glucan backbone substituted by xylose, galactose and fucose. The chain is Probable xyloglucan glycosyltransferase 2 (CSLC2) from Oryza sativa subsp. japonica (Rice).